Reading from the N-terminus, the 293-residue chain is Nucleotide-binding protein BBR47_52620 (293 aa).

17–24 (GMSGAGKT) lines the ATP pocket. Position 68–71 (68–71 (DLRG)) interacts with GTP.

Belongs to the RapZ-like family.

Displays ATPase and GTPase activities. This Brevibacillus brevis (strain 47 / JCM 6285 / NBRC 100599) protein is Nucleotide-binding protein BBR47_52620.